A 571-amino-acid polypeptide reads, in one-letter code: Hemagglutinin-neuraminidase (571 aa).

The Intravirion segment spans residues 1–26 (MDRAVGRVALENEEREAKNTWRFVFR). A helical membrane pass occupies residues 27–47 (IAIFLLIVITLAISAAALVYS). Topologically, residues 48–571 (MEASTPGDLV…LVEILKEDGV (524 aa)) are virion surface. N-linked (GlcNAc...) asparagine; by host glycosylation occurs at Asn-119. Positions 124-152 (GAPVHDPDYIGGIGKELIVDDASDVTSFY) are important for interaction with fusion/F protein. Cystine bridges form between Cys-172–Cys-196, Cys-186–Cys-247, and Cys-238–Cys-251. Residues 234–239 (NRKSCS) form an involved in neuraminidase activity region. N-linked (GlcNAc...) asparagine; by host glycans are attached at residues Asn-341 and Asn-433. Cystine bridges form between Cys-344-Cys-461 and Cys-455-Cys-465. Residues Asn-481, Asn-508, and Asn-538 are each glycosylated (N-linked (GlcNAc...) asparagine; by host). Cysteines 531 and 542 form a disulfide.

It belongs to the paramyxoviruses hemagglutinin-neuraminidase family. Homotetramer; composed of disulfide-linked homodimers. Interacts with F protein trimer. Interacts with host CG-1B; this interaction inhibits viral adsorption and replication rather than internalization.

It is found in the virion membrane. The protein localises to the host cell membrane. It carries out the reaction Hydrolysis of alpha-(2-&gt;3)-, alpha-(2-&gt;6)-, alpha-(2-&gt;8)- glycosidic linkages of terminal sialic acid residues in oligosaccharides, glycoproteins, glycolipids, colominic acid and synthetic substrates.. Functionally, mediates the viral entry into the host cell together with fusion/F protein. Attaches the virus to sialic acid-containing cell receptors and thereby initiates infection. Binding of HN protein to the receptor induces a conformational change that allows the F protein to trigger virion/cell membranes fusion. Neuraminidase activity ensures the efficient spread of the virus by dissociating the mature virions from the neuraminic acid containing glycoproteins. The sequence is that of Hemagglutinin-neuraminidase (HN) from Gallus gallus (Chicken).